Consider the following 725-residue polypeptide: Glyoxysomal fatty acid beta-oxidation multifunctional protein MFP-a (725 aa).

Glu119 serves as the catalytic Nucleophile. Glu139 serves as the catalytic Proton acceptor. The Microbody targeting signal signature appears at 723-725 (SRL).

It in the N-terminal section; belongs to the enoyl-CoA hydratase/isomerase family. This sequence in the central section; belongs to the 3-hydroxyacyl-CoA dehydrogenase family.

The protein localises to the glyoxysome. It catalyses the reaction a (3S)-3-hydroxyacyl-CoA = a (2E)-enoyl-CoA + H2O. It carries out the reaction a 4-saturated-(3S)-3-hydroxyacyl-CoA = a (3E)-enoyl-CoA + H2O. The catalysed reaction is a (3Z)-enoyl-CoA = a 4-saturated (2E)-enoyl-CoA. The enzyme catalyses a (3E)-enoyl-CoA = a 4-saturated (2E)-enoyl-CoA. It catalyses the reaction (3S)-3-hydroxybutanoyl-CoA = (3R)-3-hydroxybutanoyl-CoA. It carries out the reaction a (3S)-3-hydroxyacyl-CoA + NAD(+) = a 3-oxoacyl-CoA + NADH + H(+). The protein operates within lipid metabolism; fatty acid beta-oxidation. In Brassica napus (Rape), this protein is Glyoxysomal fatty acid beta-oxidation multifunctional protein MFP-a.